The sequence spans 57 residues: Large ribosomal subunit protein bL32 (57 aa).

The span at 1-19 (MAVPKRRMSRANTRSRRAQ) shows a compositional bias: basic residues. Residues 1–20 (MAVPKRRMSRANTRSRRAQW) are disordered.

The protein belongs to the bacterial ribosomal protein bL32 family.

In Mycolicibacterium smegmatis (strain ATCC 700084 / mc(2)155) (Mycobacterium smegmatis), this protein is Large ribosomal subunit protein bL32.